We begin with the raw amino-acid sequence, 954 residues long: Zinc finger protein 618 (954 aa).

N-acetylmethionine is present on methionine 1. Positions 1–19 are enriched in low complexity; sequence MNQPGGAAAPQADGASAAG. The segment at 1–56 is disordered; it reads MNQPGGAAAPQADGASAAGRKSTASRERLKRSQKSTKVEGPEPVPAEASLSAEQGT. Residues lysine 63 and lysine 81 each participate in a glycyl lysine isopeptide (Lys-Gly) (interchain with G-Cter in SUMO2) cross-link. 2 consecutive C2H2-type zinc fingers follow at residues 147-169 and 188-210; these read YECGICGKKYKYYNCFQTHVRAH and YTCDICGKKYKYYSCFQEHRDLH. Lysine 239 is covalently cross-linked (Glycyl lysine isopeptide (Lys-Gly) (interchain with G-Cter in SUMO2)). Residues 256 to 278 form a C2H2-type 3 zinc finger; that stretch reads YTCEFCGKQYKYYTPYQEHVALH. 2 disordered regions span residues 282-307 and 337-390; these read STAPGWEPPDDPDTGSECSHPEVSPS and RTPP…NSSE. The span at 340–357 shows a compositional bias: polar residues; it reads PATQTQTFRTPNSGSPAS. Residues 366 to 380 are compositionally biased toward basic and acidic residues; the sequence is FSRRVEGKAQNHFEE. The C2H2-type 4 zinc finger occupies 392–414; sequence YTCGACGIQFQFYNNLLEHMQSH. The disordered stretch occupies residues 421–463; sequence NIASNQSRSPPAVVEEKWKPQAQRNSANNTTTSGLTPNSMIPE. Lysine 437 participates in a covalent cross-link: Glycyl lysine isopeptide (Lys-Gly) (interchain with G-Cter in SUMO2). A compositionally biased stretch (polar residues) spans 442–459; sequence AQRNSANNTTTSGLTPNS.

The protein belongs to the krueppel C2H2-type zinc-finger protein family. As to quaternary structure, interacts with UHRF2.

The protein resides in the nucleus. It localises to the chromosome. Functionally, regulates UHRF2 function as a specific 5-hydroxymethylcytosine (5hmC) reader by regulating its chromatin localization. The protein is Zinc finger protein 618 (ZNF618) of Homo sapiens (Human).